A 172-amino-acid chain; its full sequence is Large ribosomal subunit protein bL9 (172 aa).

Belongs to the bacterial ribosomal protein bL9 family.

Its function is as follows. Binds to the 23S rRNA. The sequence is that of Large ribosomal subunit protein bL9 from Chlamydia abortus (strain DSM 27085 / S26/3) (Chlamydophila abortus).